We begin with the raw amino-acid sequence, 142 residues long: Small ribosomal subunit protein uS9 (142 aa).

Belongs to the universal ribosomal protein uS9 family. In terms of assembly, component of the small ribosomal subunit (SSU). Mature N.crassa ribosomes consist of a small (40S) and a large (60S) subunit. The 40S small subunit contains 1 molecule of ribosomal RNA (18S rRNA) and at least 32 different proteins. The large 60S subunit contains 3 rRNA molecules (26S, 5.8S and 5S rRNA) and at least 42 different proteins.

It localises to the cytoplasm. Functionally, component of the ribosome, a large ribonucleoprotein complex responsible for the synthesis of proteins in the cell. The small ribosomal subunit (SSU) binds messenger RNAs (mRNAs) and translates the encoded message by selecting cognate aminoacyl-transfer RNA (tRNA) molecules. The large subunit (LSU) contains the ribosomal catalytic site termed the peptidyl transferase center (PTC), which catalyzes the formation of peptide bonds, thereby polymerizing the amino acids delivered by tRNAs into a polypeptide chain. The nascent polypeptides leave the ribosome through a tunnel in the LSU and interact with protein factors that function in enzymatic processing, targeting, and the membrane insertion of nascent chains at the exit of the ribosomal tunnel. In Neurospora crassa (strain ATCC 24698 / 74-OR23-1A / CBS 708.71 / DSM 1257 / FGSC 987), this protein is Small ribosomal subunit protein uS9 (rps-16).